The sequence spans 445 residues: MARLFGTDGVRGVANRELTAELAMALGAAAARRLGRTGAARRRVAVVGRDPRASGEMLEAAVIAGIASEGVDTLRVGVLPTPAVAYLTSAYDADFGVMISASHNPMPDNGIKIFGPGGHKLDDATEDRIEELVHQGPGSRPTGAGIGRVVDAEDALERYLRHVGKAATTRLDALTVVVDCAHGAASLAAPRAYRAAGANVIPIHAEPDGLNINDNCGSTHMQALSAAVVSYGADLGLAHDGDADRCLAVDAHGRVIDGDAIMVVLALAMQEAGELASDTLVTTVMSNMGLHLAMRSAGIEVRTTGVGDRYVLEELRAGLFSLGGEQSGHIVLPSFGTTGDGIVTGLRLMARMAQTGRSLAGLAEPMQTLPQVLINVEVADKATVADAQPVRDAVAQVEAELGDTGRILLRPSGTEQVVRVMVEAADEDTARQMAVRVAESVSAQR.

Residue serine 102 is the Phosphoserine intermediate of the active site. Positions 102, 240, 242, and 244 each coordinate Mg(2+). A Phosphoserine modification is found at serine 102.

The protein belongs to the phosphohexose mutase family. Mg(2+) is required as a cofactor. Activated by phosphorylation.

The enzyme catalyses alpha-D-glucosamine 1-phosphate = D-glucosamine 6-phosphate. Functionally, catalyzes the conversion of glucosamine-6-phosphate to glucosamine-1-phosphate. The chain is Phosphoglucosamine mutase from Mycolicibacterium vanbaalenii (strain DSM 7251 / JCM 13017 / BCRC 16820 / KCTC 9966 / NRRL B-24157 / PYR-1) (Mycobacterium vanbaalenii).